Here is a 209-residue protein sequence, read N- to C-terminus: Probable GTP-binding protein EngB (209 aa).

In terms of domain architecture, EngB-type G spans Thr22–Ala198. Mg(2+) is bound by residues Ser37 and Thr59.

Belongs to the TRAFAC class TrmE-Era-EngA-EngB-Septin-like GTPase superfamily. EngB GTPase family. Mg(2+) serves as cofactor.

Functionally, necessary for normal cell division and for the maintenance of normal septation. This Neisseria gonorrhoeae (strain ATCC 700825 / FA 1090) protein is Probable GTP-binding protein EngB.